The sequence spans 367 residues: Protein TlpB (367 aa).

5 helical membrane-spanning segments follow: residues 15–35 (ILIS…SPYF), 53–73 (IIAP…GILI), 83–103 (IIPI…YVTF), 124–144 (IQAI…FFLL), and 153–173 (FYVV…LAPI).

It is found in the membrane. In Flavobacterium psychrophilum, this protein is Protein TlpB (tlpB).